A 347-amino-acid chain; its full sequence is Merozoite surface protein 2 (347 aa).

The signal sequence occupies residues 1 to 20 (MKVIKTLSIINFFIFVTFNI). 2 N-linked (GlcNAc...) asparagine glycosylation sites follow: N22 and N36. Residues 44-273 (AESKPPTGDG…EQTESPELQS (230 aa)) are polymorphic region. Tandem repeats lie at residues 53–60 (GAVASAGN), 61–68 (GAVASAGN), 69–76 (GAVASAGN), 77–84 (GAVASAGN), 85–88 (GAGN), 89–92 (GAGN), 93–96 (GAGN), 97–100 (GAGN), 101–104 (GAGN), 105–108 (GAGN), 109–112 (GAGN), 113–116 (GAGN), 117–120 (GAGN), 121–124 (GAGN), 125–128 (GAGN), 129–132 (GAGN), 133–136 (GAGN), 137–140 (GAGN), 141–144 (GAGN), 145–152 (GAVASAGN), 153–156 (GAGN), and 157–164 (GAVASAGN). The segment at 53–164 (GAVASAGNGA…GNGAVASAGN (112 aa)) is 6 X 8 AA repeats of G-A-V-A-S-A-G-N. The tract at residues 85-156 (GAGNGAGNGA…VASAGNGAGN (72 aa)) is 16 X 4 AA repeats of G-A-G-N. Residues 165-206 (GAVAERSSSTPATTTTTTTTNDAEASTSTSSENSNHNNAETN) are compositionally biased toward low complexity. The tract at residues 165-308 (GAVAERSSST…DSQKECTDGN (144 aa)) is disordered. 2 stretches are compositionally biased toward polar residues: residues 213 to 240 (VQPNQANKETQNNSNVQQDSQTKSNVPR) and 247 to 275 (KSPTAQPEQAENSAPTAEQTESPELQSAP). Residue N224 is glycosylated (N-linked (GlcNAc...) asparagine). N-linked (GlcNAc...) asparagine glycosylation occurs at N296. A disulfide bond links C304 and C312. N-linked (GlcNAc...) asparagine glycans are attached at residues N320 and N321. A lipid anchor (GPI-anchor amidated asparagine) is attached at N321. The propeptide at 322-347 (SSNIASINKFVVLISATLVLSFAIFI) is removed in mature form.

It localises to the cell membrane. May play a role in the merozoite attachment to the erythrocyte. This Plasmodium falciparum (isolate Nig32 / Nigeria) protein is Merozoite surface protein 2.